A 491-amino-acid polypeptide reads, in one-letter code: Lysine--tRNA ligase (491 aa).

Mg(2+) is bound by residues E399 and E406.

This sequence belongs to the class-II aminoacyl-tRNA synthetase family. In terms of assembly, homodimer. Requires Mg(2+) as cofactor.

Its subcellular location is the cytoplasm. The catalysed reaction is tRNA(Lys) + L-lysine + ATP = L-lysyl-tRNA(Lys) + AMP + diphosphate. The protein is Lysine--tRNA ligase of Chloroflexus aurantiacus (strain ATCC 29366 / DSM 635 / J-10-fl).